Here is a 276-residue protein sequence, read N- to C-terminus: 6-chlorohydroxyquinol 1,2-dioxygenase (276 aa).

Fe cation-binding residues include tyrosine 157, tyrosine 191, histidine 215, and histidine 217.

Belongs to the intradiol ring-cleavage dioxygenase family. Fe(3+) is required as a cofactor.

The protein operates within aromatic compound metabolism. Its pathway is xenobiotic degradation. In terms of biological role, involved in the degradation of 2,4,6-trichlorophenol (2,4,6-TCP). May catalyze the oxidation of 6-chlorohydroxyquinol (6-CHQ) to 2-chloromaleylacetate (2-CMA). The chain is 6-chlorohydroxyquinol 1,2-dioxygenase from Cupriavidus pinatubonensis (strain JMP 134 / LMG 1197) (Cupriavidus necator (strain JMP 134)).